The chain runs to 518 residues: Fusicoccin H C-9 hydroxylase (518 aa).

A helical membrane pass occupies residues His-12–Ser-29. N-linked (GlcNAc...) asparagine glycosylation is found at Asn-81 and Asn-168. Heme is bound at residue Cys-456.

It belongs to the cytochrome P450 family. It depends on heme as a cofactor.

It is found in the membrane. The protein operates within mycotoxin biosynthesis. Its function is as follows. Cytochrome P450 monooxygenase; part of the 2 gene clusters that mediate the biosynthesis of fusicoccins, diterpene glucosides that display phytohormone-like activity and function as potent activators of plasma membrane H(+)-ATPases in plants by modifying 14-3-3 proteins and cause the plant disease constriction canker. The first step in the pathway is performed by the fusicoccadiene synthase PaFS that possesses both prenyl transferase and terpene cyclase activity, converting isopentenyl diphosphate and dimethylallyl diphosphate into geranylgeranyl diphosphate (GGDP) and successively converting GGDP into fusicocca-2,10(14)-diene, a precursor for fusicoccin H. The second step is the oxidation at the C-8 position by the cytochrome P450 monooxygenase PaP450-2 to yield fusicocca-2,10(14)-diene-8-beta-ol. The cytochrome P450 monooxygenase PaP450-1 then catalyzes the hydroxylation at the C-16 position to produce fusicocca-2,10(14)-diene-8-beta,16-diol. The dioxygenase fc-dox then catalyzes the 16-oxydation of fusicocca-2,10(14)-diene-8-beta,16-diol to yield an aldehyde (8-beta-hydroxyfusicocca-1,10(14)-dien-16-al). The short-chain dehydrogenase/reductase fc-sdr catalyzes the reduction of the aldehyde to yield fusicocca-1,10(14)-diene-8-beta,16-diol. The next step is the hydroxylation at C-9 performed by the cytochrome P450 monooxygenase PaP450-3 that leads to fusicoccin H aglycon which is glycosylated to fusicoccin H by the O-glycosyltransferase PaGT. Hydroxylation at C-12 by the cytochrome P450 monooxygenase PaP450-4 leads then to the production of fusicoccin Q and is followed by methylation by the O-methyltransferase PaMT to yield fusicoccin P. Fusicoccin P is further converted to fusicoccin J via prenylation by the O-glucose prenyltransferase PaPT. Cytochrome P450 monooxygenase PaP450-5 then performs hydroxylation at C-19 to yield dideacetyl-fusicoccin A which is acetylated to 3'-O-deacetyl-fusicoccin A by the O-acetyltransferase PaAT-2. Finally, a another acetylation by the O-acetyltransferase PaAT-1 yields fusicoccin A. In Phomopsis amygdali (Fusicoccum amygdali), this protein is Fusicoccin H C-9 hydroxylase.